The chain runs to 284 residues: Serine/arginine-rich splicing factor RS2Z32 (284 aa).

In terms of domain architecture, RRM spans 11–81; it reads TRLYVGRLSS…SRITVEASRG (71 aa). The disordered stretch occupies residues 74 to 97; that stretch reads ITVEASRGAPRGSRDNGSRGPPPG. 2 consecutive CCHC-type zinc fingers follow at residues 99–116 and 121–138; these read GRCF…DCTA and NKCY…NCKN. The interval 132-284 is disordered; sequence IERNCKNSPS…RPSPKGSESP (153 aa). Positions 159-180 are enriched in basic residues; sequence RSPRRRRSPSRSRSYSRGRSYS. Ser-166, Ser-168, and Ser-184 each carry phosphoserine. Basic and acidic residues predominate over residues 186–203; that stretch reads VRREKSVEDRSRSPKAME. 10 positions are modified to phosphoserine: Ser-205, Ser-207, Ser-214, Ser-216, Ser-225, Ser-235, Ser-255, Ser-265, Ser-277, and Ser-281. Basic and acidic residues predominate over residues 209-236; the sequence is KGRDQSLSPDRKVIDASPKRGSDYDGSP.

This sequence belongs to the splicing factor SR family. RS2Z subfamily. In terms of assembly, component of the spliceosome. In terms of processing, extensively phosphorylated on serine residues in the RS domain.

The protein localises to the nucleus. Probably involved in intron recognition and spliceosome assembly. This Arabidopsis thaliana (Mouse-ear cress) protein is Serine/arginine-rich splicing factor RS2Z32 (RS2Z32).